A 266-amino-acid chain; its full sequence is Mitochondrial import inner membrane translocase subunit Tim29 (266 aa).

A mitochondrion-targeting transit peptide spans 1–37 (MVTAALKRFWSGGHGEAGGEAGGATTVAVKPGLWTRL). The Mitochondrial matrix portion of the chain corresponds to 38 to 65 (STWAGALLRDYAEACGDAAAAARARPGR). Residues 66 to 83 (AALYVGLLGGAAACCALA) form a helical membrane-spanning segment. Residues 84–266 (PSEAAFEEAL…DSLVQSDVSR (183 aa)) lie on the Mitochondrial intermembrane side of the membrane.

As to quaternary structure, component of the TIM22 complex, which core is composed of TIMM22, associated with TIMM10 (TIMM10A and/or TIMM10B), TIMM9, AGK and TIMM29. Interacts with TIMM10B; the interaction is direct. Interacts with TOMM40; linking the TIM22 complex to the TOM complex. Interacts with TIMM22 (when oxidized); the interaction is direct.

It is found in the mitochondrion inner membrane. Its function is as follows. Component of the TIM22 complex, a complex that mediates the import and insertion of multi-pass transmembrane proteins into the mitochondrial inner membrane. The TIM22 complex forms a twin-pore translocase that uses the membrane potential as the external driving force. Required for the stability of the TIM22 complex and functions in the assembly of the TIMM22 protein into the TIM22 complex. May facilitate cooperation between TIM22 and TOM complexes by interacting with TOMM40. The protein is Mitochondrial import inner membrane translocase subunit Tim29 (Timm29) of Mus musculus (Mouse).